The sequence spans 158 residues: Protein BTG2 (158 aa).

Ser147 bears the Phosphoserine; by MAPK1 and MAPK3 mark. Ser149 carries the phosphoserine; by MAPK14 modification.

It belongs to the BTG family. Interacts with PRKCABP. Interacts with CNOT7 and CNOT8; indicative for an association with the CCR4-NOT complex. Interacts with PIN1, inducing mitochondrial depolarization. Post-translationally, phosphorylated at Ser-147 by MAPK1/ERK2 and MAPK3/ERK1, and at Ser-149 by MAPK14, leading to PIN1-binding and mitochondrial depolarization.

Anti-proliferative protein; the function is mediated by association with deadenylase subunits of the CCR4-NOT complex. Activates mRNA deadenylation in a CNOT6 and CNOT7-dependent manner. In vitro can inhibit deadenylase activity of CNOT7 and CNOT8. Involved in cell cycle regulation. Could be involved in the growth arrest and differentiation of the neuronal precursors. Modulates transcription regulation mediated by ESR1. Involved in mitochondrial depolarization and neurite outgrowth. This is Protein BTG2 (BTG2) from Homo sapiens (Human).